Here is a 137-residue protein sequence, read N- to C-terminus: Large ribosomal subunit protein uL16 (137 aa).

It belongs to the universal ribosomal protein uL16 family. As to quaternary structure, part of the 50S ribosomal subunit.

In terms of biological role, binds 23S rRNA and is also seen to make contacts with the A and possibly P site tRNAs. The protein is Large ribosomal subunit protein uL16 of Pseudomonas paraeruginosa (strain DSM 24068 / PA7) (Pseudomonas aeruginosa (strain PA7)).